Reading from the N-terminus, the 70-residue chain is Spore germination protein-like protein YpzD (70 aa).

This sequence belongs to the GerPA/GerPF family.

The sequence is that of Spore germination protein-like protein YpzD (ypzD) from Bacillus subtilis (strain 168).